A 282-amino-acid chain; its full sequence is MEMO1 family protein Msed_2139 (282 aa).

The protein belongs to the MEMO1 family.

The protein is MEMO1 family protein Msed_2139 of Metallosphaera sedula (strain ATCC 51363 / DSM 5348 / JCM 9185 / NBRC 15509 / TH2).